The chain runs to 321 residues: Inner membrane protein YtfF (321 aa).

The Cytoplasmic segment spans residues 1 to 4 (MISG). A helical membrane pass occupies residues 5–25 (VLYALLAGLMWGLIFVGPLIV). In terms of domain architecture, EamA spans 13–141 (LMWGLIFVGP…IGIGLACVNI (129 aa)). At 26–30 (PEYPA) the chain is on the periplasmic side. Residues 31–51 (MLQSMGRYLALGLIALPIAWL) traverse the membrane as a helical segment. The Cytoplasmic portion of the chain corresponds to 52 to 65 (GRVRLRQLARRDWL). Residues 66-86 (TALMLTMMGNLIYYFCLASAI) traverse the membrane as a helical segment. Over 87–92 (QRTGAP) the chain is Periplasmic. Residues 93 to 113 (VSTMIIGTLPVVIPVFANLLY) form a helical membrane-spanning segment. Topologically, residues 114–120 (SQRDGKL) are cytoplasmic. The helical transmembrane segment at 121 to 141 (AWGKLAPALICIGIGLACVNI) threads the bilayer. At 142-154 (AELNHGLPDFDWA) the chain is on the periplasmic side. Residues 155–175 (RYTSGIVLALVSVVCWAWYAL) traverse the membrane as a helical segment. Residues 176 to 194 (RNARWLRENPDKHPMMWAT) lie on the Cytoplasmic side of the membrane. Residues 195-215 (AQALVTLPVSLIGYLVACYWL) form a helical membrane-spanning segment. The Periplasmic portion of the chain corresponds to 216–230 (NTQTPDFSLPFGPRP). Residues 231 to 251 (LVFISLMVAIAVLCSWVGALC) traverse the membrane as a helical segment. Residues 252 to 261 (WNVASQLLPT) lie on the Cytoplasmic side of the membrane. Residues 262-282 (VILGPLIVFETLAGLLYTFLL) traverse the membrane as a helical segment. Residues 283 to 285 (RQQ) lie on the Periplasmic side of the membrane. The chain crosses the membrane as a helical span at residues 286-306 (MPPLMTLSGIALLVIGVVIAV). The Cytoplasmic segment spans residues 307 to 321 (RAKPEKPLTESVSES).

It is found in the cell inner membrane. In Escherichia coli (strain K12), this protein is Inner membrane protein YtfF (ytfF).